A 306-amino-acid polypeptide reads, in one-letter code: Acetyl-coenzyme A carboxylase carboxyl transferase subunit beta (306 aa).

Residues 25–294 (LWIKCPETGE…TVVGANDDKT (270 aa)) enclose the CoA carboxyltransferase N-terminal domain.

This sequence belongs to the AccD/PCCB family. In terms of assembly, acetyl-CoA carboxylase is a heterohexamer composed of biotin carboxyl carrier protein (AccB), biotin carboxylase (AccC) and two subunits each of ACCase subunit alpha (AccA) and ACCase subunit beta (AccD).

The protein resides in the cytoplasm. It carries out the reaction N(6)-carboxybiotinyl-L-lysyl-[protein] + acetyl-CoA = N(6)-biotinyl-L-lysyl-[protein] + malonyl-CoA. It participates in lipid metabolism; malonyl-CoA biosynthesis; malonyl-CoA from acetyl-CoA: step 1/1. Component of the acetyl coenzyme A carboxylase (ACC) complex. Biotin carboxylase (BC) catalyzes the carboxylation of biotin on its carrier protein (BCCP) and then the CO(2) group is transferred by the transcarboxylase to acetyl-CoA to form malonyl-CoA. This chain is Acetyl-coenzyme A carboxylase carboxyl transferase subunit beta, found in Allorhizobium ampelinum (strain ATCC BAA-846 / DSM 112012 / S4) (Agrobacterium vitis (strain S4)).